The following is a 181-amino-acid chain: Inner membrane-spanning protein YciB (181 aa).

The next 5 membrane-spanning stretches (helical) occupy residues 10–30 (LIIF…GALI), 50–70 (MHLI…VFHD), 72–92 (AFIK…LGVS), 118–138 (VTWY…YVAF), and 148–168 (FKVF…VFYL).

This sequence belongs to the YciB family.

Its subcellular location is the cell inner membrane. Functionally, plays a role in cell envelope biogenesis, maintenance of cell envelope integrity and membrane homeostasis. The chain is Inner membrane-spanning protein YciB from Shewanella sp. (strain MR-7).